The chain runs to 257 residues: Ribosome maturation factor RimP (257 aa).

The segment at 182–257 (LRRGGPPAAD…SRLKDRDSLH (76 aa)) is disordered. Residues 191–205 (DEADEAEEAEDEEVA) show a composition bias toward acidic residues. Low complexity predominate over residues 224–236 (KASPAAKPQKQAR).

It belongs to the RimP family.

The protein resides in the cytoplasm. In terms of biological role, required for maturation of 30S ribosomal subunits. In Methylobacterium radiotolerans (strain ATCC 27329 / DSM 1819 / JCM 2831 / NBRC 15690 / NCIMB 10815 / 0-1), this protein is Ribosome maturation factor RimP.